The chain runs to 535 residues: Beta-amylase 1, chloroplastic (535 aa).

The transit peptide at 1–36 (MALNLAQSAAAAACFATAGDARRAASVVAMPSSSSS) directs the protein to the chloroplast. Substrate contacts are provided by Asp115, His155, and Asp163. The active-site Proton donor is Glu247. Residues Lys361, His366, and Thr408 each coordinate substrate. Glu446 serves as the catalytic Proton acceptor. Substrate-binding positions include 447 to 448 (NA) and Arg480.

The protein belongs to the glycosyl hydrolase 14 family.

The protein resides in the plastid. It is found in the chloroplast. The catalysed reaction is Hydrolysis of (1-&gt;4)-alpha-D-glucosidic linkages in polysaccharides so as to remove successive maltose units from the non-reducing ends of the chains.. Functionally, possesses beta-amylase activity in vitro. May be involved in cold resistance by mediating the accumulation of maltose upon freezing stress, thus contributing to the protection of membranes. This is Beta-amylase 1, chloroplastic from Oryza sativa subsp. japonica (Rice).